The sequence spans 636 residues: 1-deoxy-D-xylulose-5-phosphate synthase (636 aa).

Thiamine diphosphate is bound by residues H74 and 115–117 (GHA). D146 contacts Mg(2+). Thiamine diphosphate is bound by residues 147-148 (GA), N175, Y285, and E368. Mg(2+) is bound at residue N175.

It belongs to the transketolase family. DXPS subfamily. In terms of assembly, homodimer. Mg(2+) serves as cofactor. It depends on thiamine diphosphate as a cofactor.

The catalysed reaction is D-glyceraldehyde 3-phosphate + pyruvate + H(+) = 1-deoxy-D-xylulose 5-phosphate + CO2. The protein operates within metabolic intermediate biosynthesis; 1-deoxy-D-xylulose 5-phosphate biosynthesis; 1-deoxy-D-xylulose 5-phosphate from D-glyceraldehyde 3-phosphate and pyruvate: step 1/1. In terms of biological role, catalyzes the acyloin condensation reaction between C atoms 2 and 3 of pyruvate and glyceraldehyde 3-phosphate to yield 1-deoxy-D-xylulose-5-phosphate (DXP). In Anaeromyxobacter dehalogenans (strain 2CP-C), this protein is 1-deoxy-D-xylulose-5-phosphate synthase.